We begin with the raw amino-acid sequence, 67 residues long: Large ribosomal subunit protein uL29 (67 aa).

This sequence belongs to the universal ribosomal protein uL29 family.

In Methanothrix thermoacetophila (strain DSM 6194 / JCM 14653 / NBRC 101360 / PT) (Methanosaeta thermophila), this protein is Large ribosomal subunit protein uL29.